Reading from the N-terminus, the 361-residue chain is Peptide chain release factor 1 (361 aa).

The residue at position 236 (Gln236) is an N5-methylglutamine.

It belongs to the prokaryotic/mitochondrial release factor family. Methylated by PrmC. Methylation increases the termination efficiency of RF1.

It localises to the cytoplasm. Functionally, peptide chain release factor 1 directs the termination of translation in response to the peptide chain termination codons UAG and UAA. In Lactobacillus delbrueckii subsp. bulgaricus (strain ATCC 11842 / DSM 20081 / BCRC 10696 / JCM 1002 / NBRC 13953 / NCIMB 11778 / NCTC 12712 / WDCM 00102 / Lb 14), this protein is Peptide chain release factor 1.